Reading from the N-terminus, the 195-residue chain is ATP-dependent Clp protease proteolytic subunit (195 aa).

Serine 97 acts as the Nucleophile in catalysis. The active site involves histidine 122.

The protein belongs to the peptidase S14 family. Fourteen ClpP subunits assemble into 2 heptameric rings which stack back to back to give a disk-like structure with a central cavity, resembling the structure of eukaryotic proteasomes.

It localises to the cytoplasm. It carries out the reaction Hydrolysis of proteins to small peptides in the presence of ATP and magnesium. alpha-casein is the usual test substrate. In the absence of ATP, only oligopeptides shorter than five residues are hydrolyzed (such as succinyl-Leu-Tyr-|-NHMec, and Leu-Tyr-Leu-|-Tyr-Trp, in which cleavage of the -Tyr-|-Leu- and -Tyr-|-Trp bonds also occurs).. Functionally, cleaves peptides in various proteins in a process that requires ATP hydrolysis. Has a chymotrypsin-like activity. Plays a major role in the degradation of misfolded proteins. This chain is ATP-dependent Clp protease proteolytic subunit, found in Lactobacillus acidophilus (strain ATCC 700396 / NCK56 / N2 / NCFM).